We begin with the raw amino-acid sequence, 186 residues long: Tumor necrosis factor, alpha-induced protein 8-like protein 2 A (186 aa).

It belongs to the TNFAIP8 family. TNFAIP8L2 subfamily.

Functionally, acts as a negative regulator of innate and adaptive immunity by maintaining immune homeostasis. Negative regulator of Toll-like receptor and T-cell receptor function. Prevents hyperresponsiveness of the immune system and maintains immune homeostasis. Inhibits jun/ap1 and NF-kappa-B activation. Promotes Fas-induced apoptosis. This chain is Tumor necrosis factor, alpha-induced protein 8-like protein 2 A (tnfaip8l2a), found in Danio rerio (Zebrafish).